We begin with the raw amino-acid sequence, 514 residues long: 2,3-bisphosphoglycerate-independent phosphoglycerate mutase (514 aa).

Mn(2+)-binding residues include Asp14 and Ser64. The active-site Phosphoserine intermediate is the Ser64. Substrate-binding positions include His125, 155–156 (RD), Arg187, Arg193, 263–266 (RADR), and Lys336. Residues Asp403, His407, Asp444, His445, and His463 each contribute to the Mn(2+) site.

Belongs to the BPG-independent phosphoglycerate mutase family. In terms of assembly, monomer. Mn(2+) serves as cofactor.

The catalysed reaction is (2R)-2-phosphoglycerate = (2R)-3-phosphoglycerate. It participates in carbohydrate degradation; glycolysis; pyruvate from D-glyceraldehyde 3-phosphate: step 3/5. In terms of biological role, catalyzes the interconversion of 2-phosphoglycerate and 3-phosphoglycerate. The sequence is that of 2,3-bisphosphoglycerate-independent phosphoglycerate mutase from Shewanella baltica (strain OS195).